A 178-amino-acid polypeptide reads, in one-letter code: Protein GrpE (178 aa).

Composition is skewed to basic and acidic residues over residues 1 to 19 and 30 to 42; these read MAKH…KEEA and SPEK…ANER. Residues 1-42 are disordered; it reads MAKHKQEEHPEDVEVKEEAVETAEQAESASPEKSELELANER.

This sequence belongs to the GrpE family. In terms of assembly, homodimer.

The protein resides in the cytoplasm. Functionally, participates actively in the response to hyperosmotic and heat shock by preventing the aggregation of stress-denatured proteins, in association with DnaK and GrpE. It is the nucleotide exchange factor for DnaK and may function as a thermosensor. Unfolded proteins bind initially to DnaJ; upon interaction with the DnaJ-bound protein, DnaK hydrolyzes its bound ATP, resulting in the formation of a stable complex. GrpE releases ADP from DnaK; ATP binding to DnaK triggers the release of the substrate protein, thus completing the reaction cycle. Several rounds of ATP-dependent interactions between DnaJ, DnaK and GrpE are required for fully efficient folding. The polypeptide is Protein GrpE (Streptococcus sanguinis (strain SK36)).